Here is a 232-residue protein sequence, read N- to C-terminus: 6-phosphogluconolactonase (232 aa).

The protein belongs to the glucosamine/galactosamine-6-phosphate isomerase family. 6-phosphogluconolactonase subfamily.

It carries out the reaction 6-phospho-D-glucono-1,5-lactone + H2O = 6-phospho-D-gluconate + H(+). It participates in carbohydrate degradation; pentose phosphate pathway; D-ribulose 5-phosphate from D-glucose 6-phosphate (oxidative stage): step 2/3. Its function is as follows. Hydrolysis of 6-phosphogluconolactone to 6-phosphogluconate. In Caulobacter vibrioides (strain ATCC 19089 / CIP 103742 / CB 15) (Caulobacter crescentus), this protein is 6-phosphogluconolactonase (pgl).